Here is a 256-residue protein sequence, read N- to C-terminus: MNNDVFPNKFKAALAAKQVQIGCWSALSNPISTEVLGLAGFDWLVLDGEHAPNDISTFIPQLMALKGSASAPVVRVPTNEPVIIKRLLDIGFYNFLIPFVETKEEAEQAVASTRYPPEGIRGVSVSHRANMFGTVADYFAQSNKNITILVQIESQQGVDNVDAIAATEGVDGIFVGPSDLAAALGHLGNASHPDVQKAIQHIFNRASAHGKPSGILAPVEADARRYLEWGATFVAVGSDLGVFRSATQKLADTFKK.

Residue H50 is the Proton acceptor of the active site. Residue Q151 participates in substrate binding. E153 serves as a coordination point for Mg(2+). Substrate contacts are provided by S178 and D179. Mg(2+) is bound at residue D179.

Belongs to the HpcH/HpaI aldolase family. KDGluc aldolase subfamily. Homohexamer; trimer of dimers. Mg(2+) is required as a cofactor.

It catalyses the reaction 5-dehydro-4-deoxy-D-glucarate = 2-hydroxy-3-oxopropanoate + pyruvate. The catalysed reaction is 2-dehydro-3-deoxy-D-glucarate = 2-hydroxy-3-oxopropanoate + pyruvate. It participates in carbohydrate acid metabolism; galactarate degradation; D-glycerate from galactarate: step 2/3. Functionally, catalyzes the reversible retro-aldol cleavage of both 5-keto-4-deoxy-D-glucarate and 2-keto-3-deoxy-D-glucarate to pyruvate and tartronic semialdehyde. The protein is 5-keto-4-deoxy-D-glucarate aldolase of Shigella boydii serotype 4 (strain Sb227).